Here is a 722-residue protein sequence, read N- to C-terminus: Dual specificity tyrosine-phosphorylation-regulated kinase 2 (722 aa).

S25 bears the Phosphoserine mark. Residues 54–127 (TTTSLNGNGN…SGELKCNTPM (74 aa)) form a disordered region. The span at 66–119 (GNSNSNNNNNIGSPVSSSTTNSSNGGNERGSSTKSNSSSGSGSSGNSASSTGSG) shows a compositional bias: low complexity. The region spanning 198 to 494 (YEILEVIGKG…PDEAAHHEFL (297 aa)) is the Protein kinase domain. Residues 204–212 (IGKGSFGQV) and K227 each bind ATP. D324 serves as the catalytic Proton acceptor. 2 positions are modified to phosphotyrosine; by autocatalysis: Y356 and Y358. Disordered stretches follow at residues 494-519 (LQPS…LNSV), 557-582 (TTKS…PDIK), 624-643 (GSGS…LPGT), and 679-722 (TTTH…FGRA). The span at 506–519 (RMSSSSSSSGLNSV) shows a compositional bias: low complexity. A compositionally biased stretch (polar residues) spans 557–576 (TTKSRQQPPSQSHGHAQSNG). Composition is skewed to low complexity over residues 626 to 635 (GSTHHVSSAA) and 689 to 707 (GQQQ…MSHS).

Belongs to the protein kinase superfamily. CMGC Ser/Thr protein kinase family. MNB/DYRK subfamily. Mg(2+) is required as a cofactor. Post-translationally, phosphorylated on serine/threonine residues.

Its subcellular location is the cytoplasm. It catalyses the reaction L-seryl-[protein] + ATP = O-phospho-L-seryl-[protein] + ADP + H(+). The catalysed reaction is L-threonyl-[protein] + ATP = O-phospho-L-threonyl-[protein] + ADP + H(+). It carries out the reaction L-tyrosyl-[protein] + ATP = O-phospho-L-tyrosyl-[protein] + ADP + H(+). Its activity is regulated as follows. Autophosphorylates on Tyr-356 and Tyr-358. Functionally, in vitro; can phosphorylate exogenous substrates on Ser and Thr residues. May have a physiological role in development being involved in cellular growth and differentiation. In Drosophila melanogaster (Fruit fly), this protein is Dual specificity tyrosine-phosphorylation-regulated kinase 2.